We begin with the raw amino-acid sequence, 103 residues long: Large ribosomal subunit protein bL21 (103 aa).

The protein belongs to the bacterial ribosomal protein bL21 family. As to quaternary structure, part of the 50S ribosomal subunit. Contacts protein L20.

This protein binds to 23S rRNA in the presence of protein L20. This Nitrosospira multiformis (strain ATCC 25196 / NCIMB 11849 / C 71) protein is Large ribosomal subunit protein bL21.